The following is a 579-amino-acid chain: MIRTLLRLVPAEKRGAVAGYAVLTLLSVLLRAVGAVLLIPLLAALFSDTPSDAWLWLGWLTAVTLAGWVTDTNTARLGFDLGFAVLSRTQHDMADRLPNVAMSWFTPDNTATARQAIAATGPELAGLVVNLLTPLIGAALLPAAIGVALLFVSVPLGLAALAGVAVLFGALALSGRLSRAADKVAGETNSAFTERIIEFARTQQALRAARRVEPARSQVGSALAAQHGAGLRLLTMQIPGQVLFSLAGQVALIGFAGMAVWLTVRGQLGVPEAIALIVVLVRYLEPFAAIADLAPALETTRATLNRIQAVLDAPTLPAGRRRLDRTGAAPSIEFDDVRFSYGDEVVLDGVSFTLRPGNTTAIVGPSGSGKTTILSLIAGLQQPASGRVLLDGVDVTTLDPEARRAAVSVVFQHPYLFDGTLRDNVLVGDPEADPDDVTAAMRLARVDELLDRLPDGDATVVGEGGTALSGGERQRVSIARALLKPAPVLLVDEATSALDNANEAAVVDALTADPRPRTRVIVAHRLASIRHADRVLFVEAGRVVEDGAIDELLAAGGRFAQFWAQQQAASEWAIGSTAR.

At 1–25 the chain is on the cytoplasmic side; sequence MIRTLLRLVPAEKRGAVAGYAVLTL. Residues 21-299 form the ABC transmembrane type-1 domain; that stretch reads AVLTLLSVLL…IADLAPALET (279 aa). The chain crosses the membrane as a helical span at residues 26–46; the sequence is LSVLLRAVGAVLLIPLLAALF. Residues 47 to 48 lie on the Periplasmic side of the membrane; it reads SD. Residues 49-69 form a helical membrane-spanning segment; it reads TPSDAWLWLGWLTAVTLAGWV. The Cytoplasmic portion of the chain corresponds to 70–126; sequence TDTNTARLGFDLGFAVLSRTQHDMADRLPNVAMSWFTPDNTATARQAIAATGPELAG. Transmembrane regions (helical) follow at residues 127-147 and 148-168; these read LVVN…AIGV and ALLF…AVLF. The Cytoplasmic portion of the chain corresponds to 169 to 241; it reads GALALSGRLS…RLLTMQIPGQ (73 aa). Residues 242–262 traverse the membrane as a helical segment; the sequence is VLFSLAGQVALIGFAGMAVWL. The Periplasmic segment spans residues 263 to 272; it reads TVRGQLGVPE. Residues 273 to 293 traverse the membrane as a helical segment; that stretch reads AIALIVVLVRYLEPFAAIADL. Residues 294 to 579 are Cytoplasmic-facing; sequence APALETTRAT…SEWAIGSTAR (286 aa). Residues 332–565 enclose the ABC transporter domain; it reads IEFDDVRFSY…GGRFAQFWAQ (234 aa). 364–371 serves as a coordination point for ATP; it reads GPSGSGKT.

Belongs to the ABC transporter superfamily. Siderophore-Fe(3+) uptake transporter (SIUT) (TC 3.A.1.21) family. As to quaternary structure, forms a heterodimer with IrtA.

It is found in the cell inner membrane. Its activity is regulated as follows. The ATPase activity of IrtAB is stimulated more than 38-fold in the presence of Fe-MBT, and more than 10-fold in the presence of Fe-cMBT. In terms of biological role, part of the ABC transporter complex IrtAB involved in the import of iron-bound mycobactin (Fe-MBT) and carboxymycobactin (Fe-cMBT). Has a preference for Fe-MBT over Fe-cMBT. Transmembrane domains (TMD) form a pore in the membrane and the ATP-binding domain (NBD) is responsible for energy generation. The chain is Mycobactin import ATP-binding/permease protein IrtB from Mycolicibacterium thermoresistibile (strain ATCC 19527 / DSM 44167 / CIP 105390 / JCM 6362 / NCTC 10409 / 316) (Mycobacterium thermoresistibile).